Here is a 330-residue protein sequence, read N- to C-terminus: Aspartate--ammonia ligase (330 aa).

The protein belongs to the class-II aminoacyl-tRNA synthetase family. AsnA subfamily.

The protein localises to the cytoplasm. The catalysed reaction is L-aspartate + NH4(+) + ATP = L-asparagine + AMP + diphosphate + H(+). It functions in the pathway amino-acid biosynthesis; L-asparagine biosynthesis; L-asparagine from L-aspartate (ammonia route): step 1/1. The sequence is that of Aspartate--ammonia ligase from Photorhabdus laumondii subsp. laumondii (strain DSM 15139 / CIP 105565 / TT01) (Photorhabdus luminescens subsp. laumondii).